The sequence spans 151 residues: Deoxyuridine 5'-triphosphate nucleotidohydrolase (151 aa).

Substrate contacts are provided by residues Arg70 to Gly72, Asn83, Leu87 to Asp89, and Met97.

It belongs to the dUTPase family. It depends on Mg(2+) as a cofactor.

The enzyme catalyses dUTP + H2O = dUMP + diphosphate + H(+). It functions in the pathway pyrimidine metabolism; dUMP biosynthesis; dUMP from dCTP (dUTP route): step 2/2. Functionally, this enzyme is involved in nucleotide metabolism: it produces dUMP, the immediate precursor of thymidine nucleotides and it decreases the intracellular concentration of dUTP so that uracil cannot be incorporated into DNA. This chain is Deoxyuridine 5'-triphosphate nucleotidohydrolase, found in Pseudomonas paraeruginosa (strain DSM 24068 / PA7) (Pseudomonas aeruginosa (strain PA7)).